The following is a 359-amino-acid chain: Insulin gene enhancer protein ISL-2 (359 aa).

LIM zinc-binding domains are found at residues 25 to 86 (AMCV…RLFG) and 87 to 149 (IKCA…LLER). The interval 151 to 190 (AAGSPRSPGPLPGARGLHLPDAGSGRQPSLRTHVHKQAEK) is disordered. Residues serine 154 and serine 157 each carry the phosphoserine modification. Positions 191–250 (TTRVRTVLNEKQLHTLRTCYAANPRPDALMKEQLVEMTGLSPRVIRVWFQNKRCKDKKKS) form a DNA-binding region, homeobox. The interval 272 to 301 (GTPLVAGSPIRHENAVQGSAVEVQTYQPPW) is LIM-binding domain (LID). At serine 279 the chain carries Phosphoserine. Positions 326-336 (ESGSLGNSSGS) are enriched in low complexity. Residues 326–359 (ESGSLGNSSGSDVTSLSSQLPDTPNSMVPSPVET) form a disordered region. The segment covering 337-359 (DVTSLSSQLPDTPNSMVPSPVET) has biased composition (polar residues).

Interacts with LHX4.

The protein resides in the nucleus. Its function is as follows. Transcriptional factor that defines subclasses of motoneurons that segregate into columns in the spinal cord and select distinct axon pathways. The sequence is that of Insulin gene enhancer protein ISL-2 (Isl2) from Mus musculus (Mouse).